The following is a 697-amino-acid chain: UBA domain-containing protein 7 (697 aa).

Residues 1-94 (MDDLLDFNFY…STPKSSNYDP (94 aa)) are disordered. Low complexity predominate over residues 13 to 32 (STPSNQNNYSNNNSRTPSYS). Positions 62–77 (KKTDNKISLKELERQK) are enriched in basic and acidic residues. The segment covering 81–92 (PDSNSTPKSSNY) has biased composition (polar residues). Positions 181 to 221 (KLSSNEMYEKLRDLGFSDDQSRLALENSGSLEDAIEYILEK) constitute a UBA domain. The interval 306 to 346 (PEILPKTPIPKRKPHKVPMNEKVSEDRITTNQSRSGNDESS) is disordered. A compositionally biased stretch (basic and acidic residues) spans 323-333 (PMNEKVSEDRI). Over residues 334–345 (TTNQSRSGNDES) the composition is skewed to polar residues. Residues 412–445 (VEEQQSTGNELFRKGDFSQAIEEFTNSLSQLPAK) form a TPR repeat. The disordered stretch occupies residues 547–573 (ISSHSSESHSKRTTQQPKSTPNHTNIK). Over residues 559-573 (TTQQPKSTPNHTNIK) the composition is skewed to polar residues. In terms of domain architecture, J spans 633–696 (CRWQKVSLSE…AWELFKQQND (64 aa)).

This is UBA domain-containing protein 7 (ucp7) from Schizosaccharomyces pombe (strain 972 / ATCC 24843) (Fission yeast).